Reading from the N-terminus, the 170-residue chain is Inducible metalloproteinase inhibitor protein (170 aa).

Positions 1–19 (MKCLLYLCLWCYCVLVSSS) are cleaved as a signal peptide. N-linked (GlcNAc...) asparagine glycans are attached at residues Asn-48 and Asn-149.

In terms of processing, cleaved. Post-translationally, five disulfide bonds are present. When artificially cleaved by thermolysin between Asn-56 and Ile-57, the two obtained chains (called heavy and light chains) remain linked. The N-terminus is blocked.

Inhibits thermolysin, bacillolysin and pseudolysin, B.polymyxa metalloprotease and human MMP1 and MMP3. No activity on trypsin or cysteine protease papain. This chain is Inducible metalloproteinase inhibitor protein (IMPI), found in Galleria mellonella (Greater wax moth).